Consider the following 904-residue polypeptide: Disks large homolog 1 (904 aa).

The region spanning 4–64 is the L27 domain; it reads RKQDTQRALH…FYEVTLLDNP (61 aa). Position 115 is a phosphothreonine (threonine 115). Serine 122, serine 138, and serine 158 each carry phosphoserine. The interaction with SH3 domains stretch occupies residues 162–212; the sequence is PTEAVLPSPPTVPVIPVLPVPAENTVILPTIPQANPPPVLVNTDSLETPTY. PDZ domains lie at 224–310, 319–405, and 466–546; these read EITL…VKRR, EIKL…VAKP, and KVVL…AQYR. The tract at residues 224 to 546 is required for interaction with MARCHF2; the sequence is EITLERGNSG…QAVTIVAQYR (323 aa). Serine 232 is modified (phosphoserine). Phosphotyrosine is present on tyrosine 399. Phosphoserine is present on residues serine 568, serine 573, serine 575, serine 579, serine 598, serine 619, serine 676, serine 684, serine 687, glutamine 709, and serine 834. Residues 581 to 651 enclose the SH3 domain; the sequence is KRSLYVRALF…PSKRRVEKKE (71 aa). The disordered stretch occupies residues 662–693; the sequence is SKTRDKGEIPDDMGSKGLKHVTSNASDSESSY. Polar residues predominate over residues 682-693; sequence VTSNASDSESSY. In terms of domain architecture, Guanylate kinase-like spans 714 to 889; that stretch reads TRPVIILGPM…IYNQVKQIIE (176 aa).

This sequence belongs to the MAGUK family. As to quaternary structure, homotetramer. Interacts (via guanylate kinase-like domain) with DLGAP1, DLGAP2, DLGAP3, DLGAP4 and MAP1A. Interacts (via guanylate kinase-like domain) with KIF13B. May interact with HTR2A. Interacts (via PDZ domains) with GRIA1. Interacts (via PDZ domains) with GRIN2A. Interacts (via PDZ domains) with KCND2 and KCND3. Interacts (via PDZ domains) with KCNA1, KCNA2, KCNA3 and KCNA4. Interacts (via PDZ domains) with ADGRA3. Interacts with KCNF1. Interacts with CAMK2. Interacts with cytoskeleton-associated protein EPB41. Interacts with cytoskeleton-associated protein EZR. Found in a complex with KCNA5 and CAV3. Found in a complex with APC and CTNNB1. Interacts (via PDZ domains) with APC. Interacts with CDH1 through binding to PIK3R1. Forms multiprotein complexes with CASK, LIN7A, LIN7B, LIN7C, APBA1, and KCNJ12. Interacts with TOPK. Forms a tripartite complex composed of DLG1, MPP7 and LIN7 (LIN7A or LIN7C). May interact with TJAP1. Interacts with PTEN. Interacts with FRMPD4 (via C-terminus). Interacts with LRFN1, LRFN2 and LRFN4. Interacts with SFPQ. Interacts (via PDZ domains) with ADGRA2 (via PDZ-binding motif). Interacts with ADAM10; this interaction recruits ADAM10 to the cell membrane during long-term depression in hippocampal neurons. Interacts with DGKI (via PDZ-binding motif). Interacts (via PDZ domains) with MARCHF2 (via PDZ domain); the interaction leads to DLG1 ubiqtuitination and degradation. Interacts (via N-terminus) with MPP3; this interaction connects CADM1 with DLG1 and links CADM1 with the regulatory subunit of phosphoinositide-3-kinase (PI3K) by forming a multiprotein complex and participates in cell spreading. (Microbial infection) Interacts with HTLV-1 protein Tax. In terms of assembly, (Microbial infection) Interacts (via PDZ domains 1 and 2) with influenza A virus protein NS1; the interaction results in the translocation of DLG1 from the cell membrane to perinuclear puncta. Acts as a scaffold protein to facilitate the interaction between LIN7C and influenza A virus protein NS1; the interaction facilitates translocation of LIN7C to cytoplasmic puncta. As to quaternary structure, (Microbial infection) Interacts with human papillomavirus 18/HPV-18 protein E6. Post-translationally, phosphorylated by MAPK12. Phosphorylation of Ser-232 regulates association with GRIN2A. Ubiquitinated; by MARCHF2 which results in its degradation. As to expression, abundantly expressed in atrial myocardium (at protein level). Expressed in lung fibroblasts, cervical epithelial and B-cells (at protein level). Expressed in the brain (at protein level). Widely expressed, with isoforms displaying different expression profiles.

It localises to the cell membrane. It is found in the basolateral cell membrane. The protein localises to the endoplasmic reticulum membrane. The protein resides in the postsynaptic density. Its subcellular location is the synapse. It localises to the sarcolemma. It is found in the apical cell membrane. The protein localises to the cell junction. The protein resides in the cytoplasm. Essential multidomain scaffolding protein required for normal development. Recruits channels, receptors and signaling molecules to discrete plasma membrane domains in polarized cells. Promotes epithelial cell layer barrier function via maintaining cell-cell adhesion. May also play a role in adherens junction assembly, signal transduction, cell proliferation, synaptogenesis and lymphocyte activation. Regulates the excitability of cardiac myocytes by modulating the functional expression of Kv4 channels. Functional regulator of Kv1.5 channel. During long-term depression in hippocampal neurons, it recruits ADAM10 to the plasma membrane. This chain is Disks large homolog 1, found in Homo sapiens (Human).